A 194-amino-acid chain; its full sequence is Xanthine phosphoribosyltransferase (194 aa).

Xanthine is bound by residues leucine 20 and asparagine 27. 128-132 (ANGEA) lines the 5-phospho-alpha-D-ribose 1-diphosphate pocket. Position 156 (lysine 156) interacts with xanthine.

The protein belongs to the purine/pyrimidine phosphoribosyltransferase family. Xpt subfamily. In terms of assembly, homodimer.

It localises to the cytoplasm. The enzyme catalyses XMP + diphosphate = xanthine + 5-phospho-alpha-D-ribose 1-diphosphate. Its pathway is purine metabolism; XMP biosynthesis via salvage pathway; XMP from xanthine: step 1/1. Converts the preformed base xanthine, a product of nucleic acid breakdown, to xanthosine 5'-monophosphate (XMP), so it can be reused for RNA or DNA synthesis. In Macrococcus caseolyticus (strain JCSC5402) (Macrococcoides caseolyticum), this protein is Xanthine phosphoribosyltransferase.